We begin with the raw amino-acid sequence, 1345 residues long: Probable membrane antigen 75 (1345 aa).

Its subcellular location is the virion tegument. The protein is Probable membrane antigen 75 (75) of Equine herpesvirus 2 (strain 86/87) (EHV-2).